The primary structure comprises 145 residues: uncharacterized protein (145 aa).

It belongs to the methyltransferase superfamily.

In terms of biological role, probable methyltransferase. This is an uncharacterized protein from Schizosaccharomyces pombe (strain 972 / ATCC 24843) (Fission yeast).